We begin with the raw amino-acid sequence, 233 residues long: MYIDTGIMSNNIFLFAFFALVGLTRIEAMPTKGSEGTWDVDYEDQEHTGITCRENEHYNSTRIECEEECNDRNNKLCYRFQQFCWCNEGYIRNSSHICVKLEDCLKDEEQKSETLASSANNDSSKRLEDDLKLFSHDSVSHTSLEPETQAQKFNGIIDQETLDLVFGKPENSWAENKPLETKTQAQKFNGKIDQETLDLVFGKPKNSSAEKKPLETETQAQKFNGIIDQETLD.

The signal sequence occupies residues 1–28 (MYIDTGIMSNNIFLFAFFALVGLTRIEA). Positions 52-104 (CRENEHYNSTRIECEEECNDRNNKLCYRFQQFCWCNEGYIRNSSHICVKLEDC) constitute a TIL domain. Residues 201-233 (FGKPKNSSAEKKPLETETQAQKFNGIIDQETLD) are disordered.

The protein belongs to the polydnaviridae EGF-like motif protein family. In terms of assembly, interacts with host PAP1 and PAP3.

Its function is as follows. Counteracts the host humoral immune response by inhibiting the processing and the amidolytic activity of host PAP3. Thereby, melanization of host hemolymph, normally producing several reactive intermediates toxic for viruses, is deregulated and proper immune response cannot occur. The chain is Protease inhibitor Egf1.0 (O12) from Microplitis demolitor (Parasitoid wasp).